The chain runs to 526 residues: Medium/long-chain-fatty-acid--[acyl-carrier-protein] ligase MbtM (526 aa).

N6-acetyllysine; by Pat is present on residues Lys260 and Lys511.

The protein belongs to the ATP-dependent AMP-binding enzyme family. Acetylated on Lys-511 and Lys-260 by Pat. Lys-511 is the major acetylation site. Acetylation results in the inactivation of the enzyme.

It carries out the reaction a long-chain fatty acid + holo-[ACP] + ATP = a long-chain fatty acyl-[ACP] + AMP + diphosphate. The enzyme catalyses a medium-chain fatty acid + holo-[ACP] + ATP = a medium-chain fatty acyl-[ACP] + AMP + diphosphate. The catalysed reaction is hexadecanoate + holo-[ACP] + ATP = hexadecanoyl-[ACP] + AMP + diphosphate. It catalyses the reaction hexadecanoate + ATP + H(+) = hexadecanoyl-AMP + diphosphate. It carries out the reaction hexadecanoyl-AMP + holo-[ACP] = hexadecanoyl-[ACP] + AMP + H(+). The enzyme catalyses dodecanoate + holo-[ACP] + ATP = dodecanoyl-[ACP] + AMP + diphosphate. The catalysed reaction is dodecanoate + ATP + H(+) = dodecanoyl-AMP + diphosphate. It catalyses the reaction dodecanoyl-AMP + holo-[ACP] = dodecanoyl-[ACP] + AMP + H(+). Its pathway is siderophore biosynthesis; mycobactin biosynthesis. With respect to regulation, reversibly inactivated by post-translational acetylation by Pat in a cAMP-dependent manner and reactivated by Sir2 deacylase. Its function is as follows. Activates lipidic moieties required for mycobactin biosynthesis. Converts medium- to long-chain aliphatic fatty acids into acyl adenylate, which is further transferred on to the phosphopantetheine arm of the carrier protein MbtL. Shows a strong preference for palmitic acid (C16) and cannot use short-chain fatty acids. Proceeds via a Bi Uni Uni Bi ping-pong mechanism. During the first half-reaction (adenylation), fatty acid binds first to the free enzyme, followed by ATP and the release of pyrophosphate to form the adenylate intermediate. During the second half-reaction (ligation), holo-MbtL binds to the enzyme followed by the release of products AMP and acylated MbtL. The sequence is that of Medium/long-chain-fatty-acid--[acyl-carrier-protein] ligase MbtM from Mycolicibacterium smegmatis (strain ATCC 700084 / mc(2)155) (Mycobacterium smegmatis).